The primary structure comprises 682 residues: Potassium-transporting ATPase ATP-binding subunit (682 aa).

Transmembrane regions (helical) follow at residues 34–54 (PVMF…IAMA), 62–82 (ALFS…ANFA), 219–239 (IALT…TATL), and 254–274 (VLVA…LSAI). The active-site 4-aspartylphosphate intermediate is the Asp-307. ATP is bound by residues Asp-344, Glu-348, 377–384 (FTAQSRMS), and Lys-395. Mg(2+)-binding residues include Asp-518 and Asp-522. Transmembrane regions (helical) follow at residues 588–608 (FAII…LNIM), 616–636 (AILS…PLAL), and 656–676 (IYGL…DLLL).

Belongs to the cation transport ATPase (P-type) (TC 3.A.3) family. Type IA subfamily. As to quaternary structure, the system is composed of three essential subunits: KdpA, KdpB and KdpC.

The protein localises to the cell inner membrane. It catalyses the reaction K(+)(out) + ATP + H2O = K(+)(in) + ADP + phosphate + H(+). Part of the high-affinity ATP-driven potassium transport (or Kdp) system, which catalyzes the hydrolysis of ATP coupled with the electrogenic transport of potassium into the cytoplasm. This subunit is responsible for energy coupling to the transport system and for the release of the potassium ions to the cytoplasm. This chain is Potassium-transporting ATPase ATP-binding subunit, found in Escherichia coli (strain SMS-3-5 / SECEC).